The following is a 224-amino-acid chain: 2,5-diamino-6-ribosylamino-4(3H)-pyrimidinone 5'-phosphate reductase (224 aa).

NADP(+) contacts are provided by residues threonine 57, aspartate 61, serine 82–asparagine 85, valine 131, and glycine 153–isoleucine 156.

Belongs to the HTP reductase family. In terms of assembly, homodimer.

It carries out the reaction 2,5-diamino-6-(1-D-ribitylamino)pyrimidin-4(3H)-one 5'-phosphate + NADP(+) = 2,5-diamino-6-(1-D-ribosylamino)pyrimidin-4(3H)-one 5'-phosphate + NADPH + H(+). The enzyme catalyses 2,5-diamino-6-(1-D-ribitylamino)pyrimidin-4(3H)-one 5'-phosphate + NAD(+) = 2,5-diamino-6-(1-D-ribosylamino)pyrimidin-4(3H)-one 5'-phosphate + NADH + H(+). The protein operates within cofactor biosynthesis; riboflavin biosynthesis. In terms of biological role, catalyzes an early step in riboflavin biosynthesis, the NADPH-dependent reduction of the ribose side chain of 2,5-diamino-6-ribosylamino-4(3H)-pyrimidinone 5'-phosphate, yielding 2,5-diamino-6-ribitylamino-4(3H)-pyrimidinone 5'-phosphate. The chain is 2,5-diamino-6-ribosylamino-4(3H)-pyrimidinone 5'-phosphate reductase (ribD2) from Aquifex aeolicus (strain VF5).